Consider the following 118-residue polypeptide: Small ribosomal subunit protein uS13 (118 aa).

A disordered region spans residues 94–118 (NLPVRGQNTKNNARTRKGPIRSIKR). Basic residues predominate over residues 106–118 (ARTRKGPIRSIKR).

The protein belongs to the universal ribosomal protein uS13 family. As to quaternary structure, part of the 30S ribosomal subunit. Forms a loose heterodimer with protein S19. Forms two bridges to the 50S subunit in the 70S ribosome.

Functionally, located at the top of the head of the 30S subunit, it contacts several helices of the 16S rRNA. In the 70S ribosome it contacts the 23S rRNA (bridge B1a) and protein L5 of the 50S subunit (bridge B1b), connecting the 2 subunits; these bridges are implicated in subunit movement. Contacts the tRNAs in the A and P-sites. The polypeptide is Small ribosomal subunit protein uS13 (Psychrobacter sp. (strain PRwf-1)).